A 452-amino-acid polypeptide reads, in one-letter code: UDP-N-acetylmuramoyl-tripeptide--D-alanyl-D-alanine ligase (452 aa).

113–119 (GSNGKTT) contributes to the ATP binding site.

This sequence belongs to the MurCDEF family. MurF subfamily.

It is found in the cytoplasm. The enzyme catalyses UDP-N-acetyl-alpha-D-muramoyl-L-alanyl-gamma-D-glutamyl-L-lysine + D-alanyl-D-alanine + ATP = UDP-N-acetyl-alpha-D-muramoyl-L-alanyl-gamma-D-glutamyl-L-lysyl-D-alanyl-D-alanine + ADP + phosphate + H(+). Its pathway is cell wall biogenesis; peptidoglycan biosynthesis. In terms of biological role, involved in cell wall formation. Catalyzes the final step in the synthesis of UDP-N-acetylmuramoyl-pentapeptide, the precursor of murein. Catalyzes the addition of D-alanyl-D-alanine to UDP-MurNAc-L-alanyl-gamma-D-glutamyl-L-lysine. In vitro, can also use the mesodiaminopimelic acid-containing form of UDP-MurNAc-tripeptide, with the same efficiency, revealing that the discrimination for the amino acid residue at the third position of the peptide in the peptidoglycans is entirely supported by MurE. The chain is UDP-N-acetylmuramoyl-tripeptide--D-alanyl-D-alanine ligase from Staphylococcus aureus (strain NCTC 8325 / PS 47).